The chain runs to 456 residues: Adenylosuccinate lyase (456 aa).

N(6)-(1,2-dicarboxyethyl)-AMP is bound by residues Arg15–Tyr16, Asn90–Asp92, and Thr122–Ser123. Catalysis depends on His171, which acts as the Proton donor/acceptor. Gln247 lines the N(6)-(1,2-dicarboxyethyl)-AMP pocket. Ser295 acts as the Proton donor/acceptor in catalysis. Residues Ser296, Lys301–Asn303, Asn309, Arg335, and Ser340–Arg344 each bind N(6)-(1,2-dicarboxyethyl)-AMP.

It belongs to the lyase 1 family. Adenylosuccinate lyase subfamily. Homotetramer. Residues from neighboring subunits contribute catalytic and substrate-binding residues to each active site.

It catalyses the reaction N(6)-(1,2-dicarboxyethyl)-AMP = fumarate + AMP. The catalysed reaction is (2S)-2-[5-amino-1-(5-phospho-beta-D-ribosyl)imidazole-4-carboxamido]succinate = 5-amino-1-(5-phospho-beta-D-ribosyl)imidazole-4-carboxamide + fumarate. Its pathway is purine metabolism; AMP biosynthesis via de novo pathway; AMP from IMP: step 2/2. The protein operates within purine metabolism; IMP biosynthesis via de novo pathway; 5-amino-1-(5-phospho-D-ribosyl)imidazole-4-carboxamide from 5-amino-1-(5-phospho-D-ribosyl)imidazole-4-carboxylate: step 2/2. In terms of biological role, catalyzes two reactions in de novo purine nucleotide biosynthesis. Catalyzes the breakdown of 5-aminoimidazole- (N-succinylocarboxamide) ribotide (SAICAR or 2-[5-amino-1-(5-phospho-beta-D-ribosyl)imidazole-4-carboxamido]succinate) to 5-aminoimidazole-4-carboxamide ribotide (AICAR or 5-amino-1-(5-phospho-beta-D-ribosyl)imidazole-4-carboxamide) and fumarate, and of adenylosuccinate (ADS or N(6)-(1,2-dicarboxyethyl)-AMP) to adenosine monophosphate (AMP) and fumarate. The chain is Adenylosuccinate lyase (purB) from Legionella pneumophila subsp. pneumophila (strain Philadelphia 1 / ATCC 33152 / DSM 7513).